The primary structure comprises 684 residues: U4/U6 small nuclear ribonucleoprotein Prp3 (684 aa).

Positions 1 to 87 constitute a PWI domain; it reads MSLSKRELDE…HSKSNSDRNR (87 aa). Residues 73-107 show a composition bias toward basic and acidic residues; sequence GRSSRHSKSNSDRNRKRELKDVFGDDSEVSKESSG. Disordered regions lie at residues 73–109 and 162–183; these read GRSS…SGVK and FISP…RLPI. Positions 170–183 are enriched in polar residues; the sequence is PKISSSSQSERLPI.

Component of the precatalytic spliceosome (spliceosome B complex). Component of the U4/U6-U5 tri-snRNP complex, a building block of the precatalytic spliceosome (spliceosome B complex). The U4/U6-U5 tri-snRNP complex is composed of the U4, U6 and U5 snRNAs and at least PRPF3, PRPF4, PRPF6, PRPF8, PRPF31, SNRNP200, TXNL4A, SNRNP40, SNRPB, SNRPD1, SNRPD2, SNRPD3, SNRPE, SNRPF, SNRPG, DDX23, CD2BP2, PPIH, SNU13, EFTUD2, SART1 and USP39, plus LSM2, LSM3, LSM4, LSM5, LSM6, LSM7 and LSM8.

Its subcellular location is the nucleus. It is found in the nucleus speckle. Plays a role in pre-mRNA splicing as component of the U4/U6-U5 tri-snRNP complex that is involved in spliceosome assembly, and as component of the precatalytic spliceosome (spliceosome B complex). This is U4/U6 small nuclear ribonucleoprotein Prp3 (PRPF3) from Gallus gallus (Chicken).